Consider the following 736-residue polypeptide: Phosphoribosylformylglycinamidine synthase subunit PurL (736 aa).

Residue H49 is part of the active site. The ATP site is built by Y52 and K91. E93 contacts Mg(2+). Residues 94–97 (SHNH) and R116 each bind substrate. Catalysis depends on H95, which acts as the Proton acceptor. Position 117 (D117) interacts with Mg(2+). Q240 is a substrate binding site. Residue D268 coordinates Mg(2+). 312 to 314 (ESQ) lines the substrate pocket. 2 residues coordinate ATP: D493 and G530. N531 lines the Mg(2+) pocket. S533 contacts substrate.

The protein belongs to the FGAMS family. Monomer. Part of the FGAM synthase complex composed of 1 PurL, 1 PurQ and 2 PurS subunits.

The protein localises to the cytoplasm. The catalysed reaction is N(2)-formyl-N(1)-(5-phospho-beta-D-ribosyl)glycinamide + L-glutamine + ATP + H2O = 2-formamido-N(1)-(5-O-phospho-beta-D-ribosyl)acetamidine + L-glutamate + ADP + phosphate + H(+). It participates in purine metabolism; IMP biosynthesis via de novo pathway; 5-amino-1-(5-phospho-D-ribosyl)imidazole from N(2)-formyl-N(1)-(5-phospho-D-ribosyl)glycinamide: step 1/2. Its function is as follows. Part of the phosphoribosylformylglycinamidine synthase complex involved in the purines biosynthetic pathway. Catalyzes the ATP-dependent conversion of formylglycinamide ribonucleotide (FGAR) and glutamine to yield formylglycinamidine ribonucleotide (FGAM) and glutamate. The FGAM synthase complex is composed of three subunits. PurQ produces an ammonia molecule by converting glutamine to glutamate. PurL transfers the ammonia molecule to FGAR to form FGAM in an ATP-dependent manner. PurS interacts with PurQ and PurL and is thought to assist in the transfer of the ammonia molecule from PurQ to PurL. The polypeptide is Phosphoribosylformylglycinamidine synthase subunit PurL (Rhodopseudomonas palustris (strain BisB5)).